The chain runs to 469 residues: Glutamate--tRNA ligase 1 (469 aa).

The 'HIGH' region signature appears at 10–20 (PSPTGYLHVGG). The short motif at 252-256 (KLSKR) is the 'KMSKS' region element. Lys-255 is an ATP binding site.

This sequence belongs to the class-I aminoacyl-tRNA synthetase family. Glutamate--tRNA ligase type 1 subfamily. As to quaternary structure, monomer.

It is found in the cytoplasm. It catalyses the reaction tRNA(Glu) + L-glutamate + ATP = L-glutamyl-tRNA(Glu) + AMP + diphosphate. In terms of biological role, catalyzes the attachment of glutamate to tRNA(Glu) in a two-step reaction: glutamate is first activated by ATP to form Glu-AMP and then transferred to the acceptor end of tRNA(Glu). The polypeptide is Glutamate--tRNA ligase 1 (Fervidobacterium nodosum (strain ATCC 35602 / DSM 5306 / Rt17-B1)).